The primary structure comprises 252 residues: Chitooligosaccharide deacetylase (252 aa).

Mg(2+) contacts are provided by His-61 and His-125.

Belongs to the YdjC deacetylase family. ChbG subfamily. Homodimer. Mg(2+) serves as cofactor.

The protein resides in the cytoplasm. The catalysed reaction is N,N'-diacetylchitobiose + H2O = N-acetyl-beta-D-glucosaminyl-(1-&gt;4)-D-glucosamine + acetate. The enzyme catalyses diacetylchitobiose-6'-phosphate + H2O = N'-monoacetylchitobiose-6'-phosphate + acetate. It functions in the pathway glycan degradation; chitin degradation. Involved in the degradation of chitin. ChbG is essential for growth on the acetylated chitooligosaccharides chitobiose and chitotriose but is dispensable for growth on cellobiose and chitosan dimer, the deacetylated form of chitobiose. Deacetylation of chitobiose-6-P and chitotriose-6-P is necessary for both the activation of the chb promoter by the regulatory protein ChbR and the hydrolysis of phosphorylated beta-glucosides by the phospho-beta-glucosidase ChbF. Catalyzes the removal of only one acetyl group from chitobiose-6-P to yield monoacetylchitobiose-6-P, the inducer of ChbR and the substrate of ChbF. This chain is Chitooligosaccharide deacetylase, found in Shigella flexneri serotype 5b (strain 8401).